The chain runs to 45 residues: Lysis protein for colicin E1* (45 aa).

The signal sequence occupies residues 1 to 17 (MRKRFFVGIFAINLLVG). Cysteine 18 is lipidated: N-palmitoyl cysteine. Cysteine 18 carries the S-diacylglycerol cysteine lipid modification.

The protein localises to the cell outer membrane. Functionally, lysis proteins are required for both colicin release and partial cell lysis. The polypeptide is Lysis protein for colicin E1* (kil) (Shigella sonnei).